The following is a 122-amino-acid chain: Small ribosomal subunit protein uS13 (122 aa).

Residues 95 to 122 form a disordered region; sequence GLPVRGQRTHTNARTRKGPAKPIAGKKK.

Belongs to the universal ribosomal protein uS13 family. Part of the 30S ribosomal subunit. Forms a loose heterodimer with protein S19. Forms two bridges to the 50S subunit in the 70S ribosome.

In terms of biological role, located at the top of the head of the 30S subunit, it contacts several helices of the 16S rRNA. In the 70S ribosome it contacts the 23S rRNA (bridge B1a) and protein L5 of the 50S subunit (bridge B1b), connecting the 2 subunits; these bridges are implicated in subunit movement. Contacts the tRNAs in the A and P-sites. The sequence is that of Small ribosomal subunit protein uS13 from Caulobacter sp. (strain K31).